The following is a 122-amino-acid chain: Small ribosomal subunit protein uS13 (122 aa).

Positions 98 to 122 (VRGQKTKSNARTRKGPRPSRIKKKK) are disordered. Positions 101 to 122 (QKTKSNARTRKGPRPSRIKKKK) are enriched in basic residues.

Belongs to the universal ribosomal protein uS13 family. In terms of assembly, part of the 30S ribosomal subunit. Forms a loose heterodimer with protein S19. Forms two bridges to the 50S subunit in the 70S ribosome.

Its function is as follows. Located at the top of the head of the 30S subunit, it contacts several helices of the 16S rRNA. In the 70S ribosome it contacts the 23S rRNA (bridge B1a) and protein L5 of the 50S subunit (bridge B1b), connecting the 2 subunits; these bridges are implicated in subunit movement. Contacts the tRNAs in the A and P-sites. This Thermosipho africanus (strain TCF52B) protein is Small ribosomal subunit protein uS13.